A 1084-amino-acid polypeptide reads, in one-letter code: MTNFKFSLLACSIAFALNASTVYAAQPTNQPTNQPTNQPTNQPTNQPTNQPTNQPTNQPTNQPTNQPTNQPTNQNSNVSEQLEQINVSGSSENINIKEKKVGETQISAKKLAKQQASDSRDLVRYETGITVVETGRTGASGYAVRGVDENRVGIMVDGLRQAETLSSQGFKELFEGYGNFNNTRNSIEIENVKTATITKGADSLKSGSGALGGSVIFETKDARDYLIDKDYYLSYKRGYQTMNNQNLKTLTLAGRSKKFDILIIDTTRDGHEIENYDYKIYPNKQADLRAVGPTREKADPYQITRQSTLIKLGFQPNENHRLSVALDDSTLETKGIDLSYALRPYSTAGNEKYGERIINDQSKRKNIQFSYENFSQTPFWDHIKLSYSSQKITNKARSDEYCHQSTCNGVSNPQGLHLVEEGGVYKIVDKNGDKLTYNKNAGWYGQFQNKNGENVDNDIDSTGGSLDSVLIDCERLNCKNKFQVFVEKDEEGKDKYEYEERDIIVETLPNGKKYGKITLKKGKTPLWDDVYQEESARFLFPKSYGYSTDFVNDRDLNTNTQQIKLDLDKEFSLWHTQHSLKYGGFYEKTLKSMVNHQYNTVANVQWWAGNFFCNKLENGKRTPAPDYSHRCSLMNTDKGKETYLIPVTTKNNVLYFGDNVQLTSWLGLDLNYRYDHVKYLPSYDEKIPVPNGLITGLFKKFGPKDYVYGSKYSKPADYTDCTYNSDCYKKNFKDNLALLLRKTDYKHHSYNLGLNLDPTDWLRVQLKYANGFRAPTSDEIYMTFKHPQFSIQPNTDLKAETSKTKEVAFTFYKNSSYITLNAFQNDYRNFIDLVEVGPRPIEEGSTIAYPFHQNQNRDRARVRGIEIASRLEMGDLFEKLQGFHLGYKFTYQKGRIKDNGLNPKYKEFLELNKDKHPEYEAIARKPQPMNALQPTTSVYNIGYDAPSQKWGVDMYITNVAAKKAKDSFNSQWTSMVKRKEKIYGNEKDAEASTANGKEVKDSRGLWRNNRYTVIDTIAYWKPIKNLTFTAGVYNLTNKKYLTWDSARSIRHLGTINRVETATGKGLNRFYAPGRNYRMSVQFEF.

Positions 1–24 (MTNFKFSLLACSIAFALNASTVYA) are cleaved as a signal peptide. A run of 12 repeats spans residues 26-29 (QPTN), 30-33 (QPTN), 34-37 (QPTN), 38-41 (QPTN), 42-45 (QPTN), 46-49 (QPTN), 50-53 (QPTN), 54-57 (QPTN), 58-61 (QPTN), 62-65 (QPTN), 66-69 (QPTN), and 70-73 (QPTN). Positions 26–73 (QPTNQPTNQPTNQPTNQPTNQPTNQPTNQPTNQPTNQPTNQPTNQPTN) are 12 X 4 AA tandem repeats of Q-P-T-N. Over residues 26–75 (QPTNQPTNQPTNQPTNQPTNQPTNQPTNQPTNQPTNQPTNQPTNQPTNQN) the composition is skewed to low complexity. Positions 26 to 77 (QPTNQPTNQPTNQPTNQPTNQPTNQPTNQPTNQPTNQPTNQPTNQPTNQNSN) are disordered. Residues 83–90 (EQINVSGS) carry the TonB box motif. One can recognise a TBDR plug domain in the interval 95–220 (NIKEKKVGET…LGGSVIFETK (126 aa)). Residues 228–1084 (DKDYYLSYKR…NYRMSVQFEF (857 aa)) form the TBDR beta-barrel domain. A TonB C-terminal box motif is present at residues 1067 to 1084 (NRFYAPGRNYRMSVQFEF).

The protein belongs to the TonB-dependent receptor family. Hemoglobin/haptoglobin binding protein subfamily.

The protein resides in the cell outer membrane. Acts as a receptor for hemoglobin or the hemoglobin/haptoglobin complex of the human host and is required for heme uptake. This is Probable hemoglobin and hemoglobin-haptoglobin-binding protein 3 from Haemophilus influenzae (strain ATCC 51907 / DSM 11121 / KW20 / Rd).